The sequence spans 861 residues: Benzylsuccinate synthase alpha subunit (861 aa).

Positions 40–712 (TERTRRLKAR…QAVGLYMEVG (673 aa)) constitute a PFL domain. Positions 718–744 (TPDGRFGGEAADDGGISPYSGTDKKGP) are disordered. The 120-residue stretch at 731–850 (GGISPYSGTD…IIARNEQNFN (120 aa)) folds into the Glycine radical domain. At Gly-825 the chain carries Glycine radical.

The protein belongs to the glycyl radical enzyme (GRE) family. BSS subfamily. In terms of assembly, heterohexamer composed of 2 alpha subunits, 2 beta subunits and 2 gamma subunits.

The enzyme catalyses toluene + fumarate = 2-benzylsuccinate. It functions in the pathway xenobiotic degradation; toluene degradation. With respect to regulation, activated by the benzylsuccinate synthase activating enzyme BssD. Rapidly inactivated by oxygen. Functionally, catalyzes the addition of fumarate to the methyl group of toluene, leading to the formation of benzylsuccinate. The protein is Benzylsuccinate synthase alpha subunit (bssA) of Thauera aromatica.